The primary structure comprises 146 residues: Leghemoglobin Lb120-1 (146 aa).

The 145-residue stretch at 2–146 (GFTEKQEALV…LASAIKKAMN (145 aa)) folds into the Globin domain. 2 positions are modified to nitrated tyrosine: Y24 and Y29. S44 serves as a coordination point for heme b. Position 44 is a phosphoserine (S44). H61 provides a ligand contact to O2. K64, H93, and K96 together coordinate heme b. At Y134 the chain carries Nitrated tyrosine.

This sequence belongs to the plant globin family. Monomer. Nitrated in effective nodules and particularly in hypoxic conditions; this mechanism may play a protective role in the symbiosis by buffering toxic peroxynitrite NO(2)(-). Nitration level decrease during nodule senescence. In terms of processing, phosphorylation at Ser-44 disrupts the molecular environment of its porphyrin ring oxygen binding pocket, thus leading to a reduced oxygen consumption and to the delivery of oxygen O(2) to symbiosomes. In terms of tissue distribution, root nodules.

It is found in the cytoplasm. The protein localises to the cytosol. The protein resides in the nucleus. Functionally, leghemoglobin that reversibly binds oxygen O(2) through a pentacoordinated heme iron. In root nodules, facilitates the diffusion of oxygen to the bacteroids while preventing the bacterial nitrogenase from being inactivated by buffering dioxygen, nitric oxide and carbon monoxide, and promoting the formation of reactive oxygen species (ROS, e.g. H(2)O(2)). This role is essential for symbiotic nitrogen fixation (SNF). In Pisum sativum (Garden pea), this protein is Leghemoglobin Lb120-1.